We begin with the raw amino-acid sequence, 377 residues long: Mitogen-activated protein kinase pmk-1 (377 aa).

Residues 35 to 319 form the Protein kinase domain; that stretch reads YINLTPIGTG…AKEAMEHEYL (285 aa). Residues 41–49 and K64 contribute to the ATP site; that span reads IGTGAYGTV. Residue D179 is the Proton acceptor of the active site. The residue at position 191 (T191) is a Phosphothreonine. Positions 191 to 193 match the TXY motif; the sequence is TGY. Y193 carries the phosphotyrosine modification.

Belongs to the protein kinase superfamily. CMGC Ser/Thr protein kinase family. MAP kinase subfamily. Interacts with transcription factor atf-7; perhaps in a manner dependent on dual specificity protein kinase sek-1. Mg(2+) is required as a cofactor. The cofactor is Mn(2+). In terms of processing, dually phosphorylated on Thr-191 and Tyr-193, probably by sek-1, which activates the enzyme. Increased phosphorylation in response to the heavy metal arsenite. Increased phosphorylation in response to intestinal colonization by probiotic Lactobacillus fermentum strain JDFM216. In terms of tissue distribution, expressed in intestinal cells.

The protein localises to the nucleus. It catalyses the reaction L-seryl-[protein] + ATP = O-phospho-L-seryl-[protein] + ADP + H(+). The enzyme catalyses L-threonyl-[protein] + ATP = O-phospho-L-threonyl-[protein] + ADP + H(+). Activated by phosphorylation on threonine and tyrosine. Inhibited by pyridinyl-imidazole related compounds. Serine/threonine kinase which responds to activation by environmental stress and pro-inflammatory cytokines by phosphorylating downstream targets. As part of a MAP kinase signaling pathway, plays a role in modulation of lifespan and immunity. Phosphorylates skn-1 which probably regulates skn-1 nuclear translocation in response to oxidative stress. Probably by activating skn-1, involved in the up-regulation of gcs-1 and glutathione-S-transferase gst-4 expression upon bacteria infection. Up-regulates expression of gcs-1 in intestinal cells upon arsenite treatment. Functions downstream of the MAPKK sek-1 and the MAPKKK nsy-1 as the MAP kinase which regulates pathogen resistance and responses to oxidative stress. Required for expression of antimicrobial peptide nlp-29 in response to fungal infection or physical injury. Involved in resistance to the nematotoxic C.cinerea galectin (Cgl2). May play a redundant role with other MAP kinases in susceptibility to anoxia, downstream of tir-1/nsy-1. Phosphorylates transcription factor rnt-1 during oxidative stress which results in rnt-1 stabilization in the intestine. Phosphorylates transcription factor atf-7 during pathogen infection resulting in modulation of target genes. Probably downstream of nsy-1 and sek-1, involved in germline apoptosis induced by heavy metals, such as Cu(2+). Regulates the basal expression of immune effector genes including irg-4, irg-5, mul-1 and drd-50. The polypeptide is Mitogen-activated protein kinase pmk-1 (Caenorhabditis elegans).